Reading from the N-terminus, the 136-residue chain is Neuropeptide CCHamide-2 (136 aa).

The signal sequence occupies residues 1-24; it reads MKSTISLLLVVICTVVLAAQQSQA. Cys-28 and Cys-35 form a disulfide bridge. Histidine amide is present on His-39. Residues 42–78 form a disordered region; that stretch reads RSLSPGSGSGTGVGGGMGEAASGGQEPDYVRPNGLLP. The propeptide occupies 43–136; that stretch reads SLSPGSGSGT…ANSAELNGVN (94 aa). The segment covering 48-59 has biased composition (gly residues); that stretch reads SGSGTGVGGGMG.

Expressed in endocrine cells of the larval midgut (at protein level). Also expressed in endocrine cells of the midgut of adult males and females (at protein level). In the midgut, expression occurs mainly in the anterior region (at protein level). In the larval central nervous system, expressed in about 40 neurons in the brain hemispheres and ventral nerve cord (at protein level). Highly expressed in larval and adult gut with low levels in larval and adult brain. Very little expression in the larval fat body. However, another study shows high levels of expression in the larval fat body as well as the larval gut with low levels in the larval central nervous system.

It is found in the secreted. Ligand for the CCHamide-2 receptor CCHa2-R. In one study, shown to be an orexigenic peptide which induces appetite and stimulates food intake, leading to the release of insulin-like peptides which stimulate growth. In another study, shown to be a nutrient-sensitive peptide derived from peripheral tissues which controls growth by directly regulating the production and release of insulin-like peptides. This Drosophila melanogaster (Fruit fly) protein is Neuropeptide CCHamide-2.